Reading from the N-terminus, the 344-residue chain is Heat-inducible transcription repressor HrcA (344 aa).

It belongs to the HrcA family.

In terms of biological role, negative regulator of class I heat shock genes (grpE-dnaK-dnaJ and groELS operons). Prevents heat-shock induction of these operons. In Streptococcus pneumoniae serotype 19F (strain G54), this protein is Heat-inducible transcription repressor HrcA.